A 258-amino-acid polypeptide reads, in one-letter code: Ubiquinone/menaquinone biosynthesis C-methyltransferase UbiE (258 aa).

The interval 1–21 is disordered; sequence MSESRTSADGGMETSYGFREV. S-adenosyl-L-methionine-binding positions include Thr81, Asp102, and 130–131; that span reads NA.

This sequence belongs to the class I-like SAM-binding methyltransferase superfamily. MenG/UbiE family.

The enzyme catalyses a 2-demethylmenaquinol + S-adenosyl-L-methionine = a menaquinol + S-adenosyl-L-homocysteine + H(+). The catalysed reaction is a 2-methoxy-6-(all-trans-polyprenyl)benzene-1,4-diol + S-adenosyl-L-methionine = a 5-methoxy-2-methyl-3-(all-trans-polyprenyl)benzene-1,4-diol + S-adenosyl-L-homocysteine + H(+). The protein operates within quinol/quinone metabolism; menaquinone biosynthesis; menaquinol from 1,4-dihydroxy-2-naphthoate: step 2/2. Its pathway is cofactor biosynthesis; ubiquinone biosynthesis. Its function is as follows. Methyltransferase required for the conversion of demethylmenaquinol (DMKH2) to menaquinol (MKH2) and the conversion of 2-polyprenyl-6-methoxy-1,4-benzoquinol (DDMQH2) to 2-polyprenyl-3-methyl-6-methoxy-1,4-benzoquinol (DMQH2). This is Ubiquinone/menaquinone biosynthesis C-methyltransferase UbiE from Rhizobium johnstonii (strain DSM 114642 / LMG 32736 / 3841) (Rhizobium leguminosarum bv. viciae).